A 521-amino-acid polypeptide reads, in one-letter code: Apolipoprotein N-acyltransferase (521 aa).

Transmembrane regions (helical) follow at residues 24–44 (IKET…FIAL), 71–91 (WLGF…IGYI), 128–148 (IGFL…FNNL), 151–171 (IADI…NSGI), and 182–202 (NLLN…YGMI). Residues 218 to 472 (LNIAAIQLNT…KGYLLSTVKL (255 aa)) enclose the CN hydrolase domain. The active-site Proton acceptor is glutamate 263. Lysine 331 is an active-site residue. Cysteine 383 functions as the Nucleophile in the catalytic mechanism.

This sequence belongs to the CN hydrolase family. Apolipoprotein N-acyltransferase subfamily.

Its subcellular location is the cell inner membrane. It carries out the reaction N-terminal S-1,2-diacyl-sn-glyceryl-L-cysteinyl-[lipoprotein] + a glycerophospholipid = N-acyl-S-1,2-diacyl-sn-glyceryl-L-cysteinyl-[lipoprotein] + a 2-acyl-sn-glycero-3-phospholipid + H(+). It participates in protein modification; lipoprotein biosynthesis (N-acyl transfer). Functionally, catalyzes the phospholipid dependent N-acylation of the N-terminal cysteine of apolipoprotein, the last step in lipoprotein maturation. The chain is Apolipoprotein N-acyltransferase from Borreliella burgdorferi (strain ATCC 35210 / DSM 4680 / CIP 102532 / B31) (Borrelia burgdorferi).